A 397-amino-acid chain; its full sequence is Lysophospholipid transporter LplT (397 aa).

Over 1–17 (MSESVHTNTSLWSKGMK) the chain is Periplasmic. The helical transmembrane segment at 18–38 (AVIVAQFLSAFGDNALLFATL) threads the bilayer. Topologically, residues 39–52 (ALLNAQFYPEWSQP) are cytoplasmic. A helical transmembrane segment spans residues 53 to 73 (ILQMVFVGAYILFAPFVGQVA). The Periplasmic segment spans residues 74–90 (DSFAKGRVMMFANGLKL). The chain crosses the membrane as a helical span at residues 91 to 111 (LGAASICFGINPFLGYTLVGV). Topologically, residues 112–144 (GAAAYSPAKYGILGELTTGSKLVKANGLMEAST) are cytoplasmic. Residues 145 to 165 (IAAILLGSVAGGVLADWHVLV) traverse the membrane as a helical segment. Ala-166 is a topological domain (periplasmic). Residues 167 to 187 (LAACALAYGGAVVANIYIPKL) traverse the membrane as a helical segment. At 188 to 226 (AAARPGQSWNLINMTRSFLNACTSLWRNGETRFSLVGTS) the chain is on the cytoplasmic side. Residues 227 to 247 (LFWGAGVTLRFLLVLWVPVAL) traverse the membrane as a helical segment. Residues 248–256 (GITDNATPT) lie on the Periplasmic side of the membrane. The chain crosses the membrane as a helical span at residues 257 to 277 (YLNAMVAIGIVVGAGAAAKLV). At 278-280 (TLE) the chain is on the cytoplasmic side. A helical membrane pass occupies residues 281 to 301 (TVSRCMPAGILIGVVVLIFSL). The Periplasmic segment spans residues 302–304 (QHE). Residues 305 to 325 (LLPAYALLMLIGVMGGFFVVP) form a helical membrane-spanning segment. The Cytoplasmic segment spans residues 326-343 (LNALLQERGKKSVGAGNA). Residues 344–364 (IAVQNLGENSAMLLMLGIYSL) traverse the membrane as a helical segment. Topologically, residues 365–366 (AV) are periplasmic. Residues 367-387 (MIGIPVVPIGIGFGALFALAI) traverse the membrane as a helical segment. The Cytoplasmic segment spans residues 388–397 (TALWIWQRRH).

This sequence belongs to the major facilitator superfamily. LplT (TC 2.A.1.42) family.

It is found in the cell inner membrane. In terms of biological role, catalyzes the facilitated diffusion of 2-acyl-glycero-3-phosphoethanolamine (2-acyl-GPE) into the cell. The polypeptide is Lysophospholipid transporter LplT (Escherichia coli (strain SE11)).